A 397-amino-acid polypeptide reads, in one-letter code: Iron-sulfur cluster assembly SufBD family protein Mb1497 (397 aa).

The protein belongs to the iron-sulfur cluster assembly SufBD family.

The polypeptide is Iron-sulfur cluster assembly SufBD family protein Mb1497 (Mycobacterium bovis (strain ATCC BAA-935 / AF2122/97)).